The following is a 290-amino-acid chain: MEDFRVRHECSSLRGTLLDSRYAKAVQCLVEEVIDIGGREVELCNNILINQLFPGRRRPGFALSSEIKSELCSSGFMSLPENHEIHIKITKLLSLLQQVEERFEQYCNQLEQVISSFEEIAGEGSSKVYTGLALQAMTRHFGSLEEAIISQLNSVRRRFIISHQDVPKIISSGLSQLSLFDGNTTSSSLQRLGLVQGPQRHAWKPIRGLPETSVAILRAWLFQHFLHPYPNEAEKLVLASQTGLSKNQVSNWFINARVRLWKPMIEEMYREEFGDSLDESMQREANDDSN.

Positions 20–36 (SRYAKAVQCLVEEVIDI) are SR/KY domain. Residues 81-152 (ENHEIHIKIT…SLEEAIISQL (72 aa)) are BELL domain. Positions 202 to 264 (AWKPIRGLPE…NARVRLWKPM (63 aa)) form a DNA-binding region, homeobox.

It belongs to the TALE/BELL homeobox family. As to quaternary structure, may form heterodimeric complexes with TALE/KNOX proteins.

It localises to the nucleus. This Arabidopsis thaliana (Mouse-ear cress) protein is BEL1-like homeodomain protein 11 (BLH11).